Here is a 192-residue protein sequence, read N- to C-terminus: dTTP/UTP pyrophosphatase (192 aa).

The active-site Proton acceptor is Asp-72.

Belongs to the Maf family. YhdE subfamily. Requires a divalent metal cation as cofactor.

It is found in the cytoplasm. It carries out the reaction dTTP + H2O = dTMP + diphosphate + H(+). It catalyses the reaction UTP + H2O = UMP + diphosphate + H(+). In terms of biological role, nucleoside triphosphate pyrophosphatase that hydrolyzes dTTP and UTP. May have a dual role in cell division arrest and in preventing the incorporation of modified nucleotides into cellular nucleic acids. In Hydrogenovibrio crunogenus (strain DSM 25203 / XCL-2) (Thiomicrospira crunogena), this protein is dTTP/UTP pyrophosphatase.